We begin with the raw amino-acid sequence, 328 residues long: Arylacetonitrilase (328 aa).

The CN hydrolase domain occupies 5–278 (VRVAVTQAEP…EGIIYADLDF (274 aa)). The active-site Proton acceptor is the Glu-45. The active site involves Lys-125. Cys-160 serves as the catalytic Nucleophile.

This sequence belongs to the carbon-nitrogen hydrolase superfamily. Nitrilase family.

It catalyses the reaction a nitrile + 2 H2O = a carboxylate + NH4(+). The catalysed reaction is 4-chlorophenylacetonitrile + 2 H2O = 4-chlorophenylacetate + NH4(+). Its function is as follows. Nitrilase that hydrolyzes preferentially phenylacetonitrile, (R,S)-mandelonitrile, and 3-indolylacetonitrile. This Aspergillus niger (strain ATCC MYA-4892 / CBS 513.88 / FGSC A1513) protein is Arylacetonitrilase.